The following is a 528-amino-acid chain: GMP synthase [glutamine-hydrolyzing] (528 aa).

The region spanning 3–199 (KVAIIDFGSQ…FLDIAGCQKD (197 aa)) is the Glutamine amidotransferase type-1 domain. Cys-83 serves as the catalytic Nucleophile. Active-site residues include His-174 and Glu-176. The GMPS ATP-PPase domain maps to 200 to 394 (WTVTSFIDDQ…LGISTEILMR (195 aa)). 227 to 233 (SGGVDSS) is a binding site for ATP.

As to quaternary structure, homodimer.

The catalysed reaction is XMP + L-glutamine + ATP + H2O = GMP + L-glutamate + AMP + diphosphate + 2 H(+). It participates in purine metabolism; GMP biosynthesis; GMP from XMP (L-Gln route): step 1/1. In terms of biological role, catalyzes the synthesis of GMP from XMP. The polypeptide is GMP synthase [glutamine-hydrolyzing] (Ehrlichia ruminantium (strain Gardel)).